Here is a 713-residue protein sequence, read N- to C-terminus: Bifunctional protein gal10 (713 aa).

A galactowaldenase region spans residues Met-1–Ile-350. Residue Tyr-7–Leu-38 participates in NAD(+) binding. The tract at residues Asp-351–Tyr-713 is mutarotase. His-532 functions as the For mutarotase activity in the catalytic mechanism.

This sequence in the N-terminal section; belongs to the NAD(P)-dependent epimerase/dehydratase family. The protein in the C-terminal section; belongs to the aldose epimerase family. NAD(+) is required as a cofactor.

It carries out the reaction UDP-alpha-D-glucose = UDP-alpha-D-galactose. The enzyme catalyses alpha-D-glucose = beta-D-glucose. It functions in the pathway carbohydrate metabolism; galactose metabolism. Its pathway is carbohydrate metabolism; hexose metabolism. Its function is as follows. Mutarotase converts alpha-aldose to the beta-anomer. It is active on D-glucose, L-arabinose, D-xylose, D-galactose, maltose and lactose. The sequence is that of Bifunctional protein gal10 (gal10) from Schizosaccharomyces pombe (strain 972 / ATCC 24843) (Fission yeast).